The sequence spans 193 residues: MSPMSGLRQQLKMLGTALLGKRATKSVKKKPFTEVEIKDLRTAFDLLDRNRDGRVTANELQFMLKNLGINVSDELIHDLIREASHSGNGLINEAEFLQWVGRIQALRDEQHSHEDSKDSKPVDEADDVTEDLIAAFRVFDRDGNGFITRDELQTAMEMIGEPLNEQQLEQLLVIADLDQDGRINYEEFTRLLL.

4 EF-hand domains span residues 35 to 70 (VEIK…LGIN), 71 to 106 (VSDE…IQAL), 127 to 162 (DVTE…IGEP), and 163 to 193 (LNEQ…RLLL). Ca(2+) contacts are provided by D48, N50, D52, R54, and E59. Ca(2+)-binding residues include D140, D142, N144, E151, D176, D178, D180, R182, and E187.

The chain is Calcium-binding protein E63-1 (Eip63F-1) from Drosophila melanogaster (Fruit fly).